Consider the following 266-residue polypeptide: Aliphatic sulfonates import ATP-binding protein SsuB (266 aa).

Positions 23 to 244 (LALDAITKHY…RRGSAKLAEL (222 aa)) constitute an ABC transporter domain. 55-62 (GRSGCGKS) contributes to the ATP binding site.

Belongs to the ABC transporter superfamily. Aliphatic sulfonates importer (TC 3.A.1.17.2) family. In terms of assembly, the complex is composed of two ATP-binding proteins (SsuB), two transmembrane proteins (SsuC) and a solute-binding protein (SsuA).

The protein resides in the cell inner membrane. The enzyme catalyses ATP + H2O + aliphatic sulfonate-[sulfonate-binding protein]Side 1 = ADP + phosphate + aliphatic sulfonateSide 2 + [sulfonate-binding protein]Side 1.. Its function is as follows. Part of the ABC transporter complex SsuABC involved in aliphatic sulfonates import. Responsible for energy coupling to the transport system. This is Aliphatic sulfonates import ATP-binding protein SsuB from Pectobacterium atrosepticum (strain SCRI 1043 / ATCC BAA-672) (Erwinia carotovora subsp. atroseptica).